A 491-amino-acid polypeptide reads, in one-letter code: Probable allantoate deiminase (491 aa).

The N-terminal stretch at 1–32 (MALLLSYPRRHPSIHLLILSAYALFLLPILDG) is a signal peptide. Asn-109 is a glycosylation site (N-linked (GlcNAc...) asparagine). Residues His-120, Asp-131, Glu-168, and His-234 each coordinate Mn(2+). Residues Asn-265 and Asn-343 are each glycosylated (N-linked (GlcNAc...) asparagine). Mn(2+) is bound at residue His-454.

Belongs to the peptidase M20A family. Homodimer. The cofactor is Mn(2+).

It is found in the endoplasmic reticulum. It catalyses the reaction allantoate + H2O + 2 H(+) = (S)-2-ureidoglycine + NH4(+) + CO2. Involved in the catabolism of purine nucleotides. The sequential activity of AAH, UGLYAH and UAH allows a complete purine breakdown without the intermediate generation of urea. The sequence is that of Probable allantoate deiminase from Oryza sativa subsp. japonica (Rice).